We begin with the raw amino-acid sequence, 91 residues long: Small ribosomal subunit protein uS19 (91 aa).

Belongs to the universal ribosomal protein uS19 family.

Its function is as follows. Protein S19 forms a complex with S13 that binds strongly to the 16S ribosomal RNA. In Azotobacter vinelandii (strain DJ / ATCC BAA-1303), this protein is Small ribosomal subunit protein uS19.